Here is a 1581-residue protein sequence, read N- to C-terminus: Ankyrin repeat domain-containing protein 26 (1581 aa).

The tract at residues 1-22 (MKKIFGFRSKGPSPLGPSARPR) is disordered. Ser13 carries the phosphoserine modification. ANK repeat units lie at residues 46–76 (KDMGKIHKAASVGDVAKVQHILILGKSGVND), 80–109 (KDRTALHLACAYGHPEVVTLLVERKCEIDA), 113–142 (ESSTALIKAVQCQEEECAAILLDHGADPNV), 146–175 (SGNTALHYAVYSENTSMAAKLLAHNANIEA), and 179–208 (DDLTPMLLAVKENKQHIVEFLVKKKASIHA). Disordered regions lie at residues 225 to 270 (RLQR…FDNK), 299 to 343 (LDNG…PVEG), 361 to 381 (SASQEQPNHDNLTRADGWHKS), and 488 to 652 (VLNK…QTAA). Polar residues predominate over residues 229–250 (SENSNPVDNGSEDGSLTRSYNT). Ser239 and Ser260 each carry phosphoserine. A compositionally biased stretch (acidic residues) spans 308 to 319 (SDSPSESEDAIE). Polar residues predominate over residues 327-337 (RVQTLSPSRQS). Basic and acidic residues predominate over residues 367-381 (PNHDNLTRADGWHKS). Polar residues predominate over residues 491-504 (KTETVGMTDAQTFK). Basic and acidic residues-rich tracts occupy residues 505-516 (SEPESVSREEQT), 524-538 (SQQKVEEKRKYKNNE), and 585-601 (KEAKKMENEKWVSREPA). Ser511 bears the Phosphoserine mark. Coiled-coil stretches lie at residues 715–845 (RSHC…NARM), 876–1345 (HEKE…MVEH), 1396–1470 (RSQM…RSLL), and 1521–1550 (LTKMHQELEKSINRELKEATAELESEFCRV).

Interacts with TRIO. Interacts with GPS2. Interacts with CCDC85B. Interacts with HMMR. As to expression, widely expressed. Expressed in the arcuate and ventromedial nuclei within the hypothalamus and in the ependyma and the circumventricular organs (at protein level).

The protein resides in the cytoplasm. It is found in the cytosol. Functionally, acts as a regulator of adipogenesis. Involved in the regulation of the feeding behavior. This is Ankyrin repeat domain-containing protein 26 (Ankrd26) from Mus musculus (Mouse).